The following is a 205-amino-acid chain: Outer-membrane lipoprotein LolB (205 aa).

The signal sequence occupies residues methionine 1–glycine 17. Residue cysteine 18 is the site of N-palmitoyl cysteine attachment. Cysteine 18 carries the S-diacylglycerol cysteine lipid modification.

The protein belongs to the LolB family. In terms of assembly, monomer.

Its subcellular location is the cell outer membrane. In terms of biological role, plays a critical role in the incorporation of lipoproteins in the outer membrane after they are released by the LolA protein. In Pseudomonas putida (strain ATCC 700007 / DSM 6899 / JCM 31910 / BCRC 17059 / LMG 24140 / F1), this protein is Outer-membrane lipoprotein LolB.